Reading from the N-terminus, the 421-residue chain is Probable dual-specificity RNA methyltransferase RlmN (421 aa).

The segment at 1 to 23 (MTATTAESGRPDQPPTAEAGRPV) is disordered. Catalysis depends on E127, which acts as the Proton acceptor. Positions 133 to 372 (YPDRATVCVS…VTTVRDTRGR (240 aa)) constitute a Radical SAM core domain. C140 and C378 form a disulfide bridge. [4Fe-4S] cluster contacts are provided by C147, C151, and C154. Residues 202–203 (GE), S236, 259–261 (SLH), and N335 contribute to the S-adenosyl-L-methionine site. The S-methylcysteine intermediate role is filled by C378. A disordered region spans residues 383–421 (AEPAGKPERTDRPEQVGSDRLVEFGAVGSTTPDGDRVLR). The span at 387–396 (GKPERTDRPE) shows a compositional bias: basic and acidic residues.

Belongs to the radical SAM superfamily. RlmN family. Requires [4Fe-4S] cluster as cofactor.

It localises to the cytoplasm. It catalyses the reaction adenosine(2503) in 23S rRNA + 2 reduced [2Fe-2S]-[ferredoxin] + 2 S-adenosyl-L-methionine = 2-methyladenosine(2503) in 23S rRNA + 5'-deoxyadenosine + L-methionine + 2 oxidized [2Fe-2S]-[ferredoxin] + S-adenosyl-L-homocysteine. It carries out the reaction adenosine(37) in tRNA + 2 reduced [2Fe-2S]-[ferredoxin] + 2 S-adenosyl-L-methionine = 2-methyladenosine(37) in tRNA + 5'-deoxyadenosine + L-methionine + 2 oxidized [2Fe-2S]-[ferredoxin] + S-adenosyl-L-homocysteine. Functionally, specifically methylates position 2 of adenine 2503 in 23S rRNA and position 2 of adenine 37 in tRNAs. The chain is Probable dual-specificity RNA methyltransferase RlmN from Frankia casuarinae (strain DSM 45818 / CECT 9043 / HFP020203 / CcI3).